A 542-amino-acid polypeptide reads, in one-letter code: Glucose-6-phosphate isomerase (542 aa).

The Proton donor role is filled by glutamate 353. Catalysis depends on residues histidine 384 and lysine 508.

The protein belongs to the GPI family.

It localises to the cytoplasm. The catalysed reaction is alpha-D-glucose 6-phosphate = beta-D-fructose 6-phosphate. The protein operates within carbohydrate biosynthesis; gluconeogenesis. It participates in carbohydrate degradation; glycolysis; D-glyceraldehyde 3-phosphate and glycerone phosphate from D-glucose: step 2/4. In terms of biological role, catalyzes the reversible isomerization of glucose-6-phosphate to fructose-6-phosphate. This chain is Glucose-6-phosphate isomerase, found in Corynebacterium efficiens (strain DSM 44549 / YS-314 / AJ 12310 / JCM 11189 / NBRC 100395).